The chain runs to 144 residues: MLLPKRVKYRREHRGKMRGRAKGGTEVHFGEFGIQALEASWITNRQIEAARIAMTRYMKRGGKVWIKIFPSKPYTAKPLEVRMGSGKGAPEGWVAVVKPGKVLFEISGVSEEVAREALRLASHKLPIKTKFVKREEIGGESNES.

This sequence belongs to the universal ribosomal protein uL16 family. Part of the 50S ribosomal subunit.

Binds 23S rRNA and is also seen to make contacts with the A and possibly P site tRNAs. In Bacillus subtilis (strain 168), this protein is Large ribosomal subunit protein uL16.